Here is a 405-residue protein sequence, read N- to C-terminus: Aspartokinase (405 aa).

2 ACT domains span residues 267–344 (VSME…AKVS) and 345–405 (IVGV…QLDQ).

It belongs to the aspartokinase family.

It carries out the reaction L-aspartate + ATP = 4-phospho-L-aspartate + ADP. It functions in the pathway amino-acid biosynthesis; L-lysine biosynthesis via DAP pathway; (S)-tetrahydrodipicolinate from L-aspartate: step 1/4. It participates in amino-acid biosynthesis; L-methionine biosynthesis via de novo pathway; L-homoserine from L-aspartate: step 1/3. Its pathway is amino-acid biosynthesis; L-threonine biosynthesis; L-threonine from L-aspartate: step 1/5. The chain is Aspartokinase (lysC) from Helicobacter pylori (strain ATCC 700392 / 26695) (Campylobacter pylori).